The primary structure comprises 337 residues: MRLVFAGTPAVALPSLRALIDSPRHDVVAVVTRPDRPSGRGRKVKPPPVHVLADEAGIPVLSPDRPRDPEFLATLAGLAPDCCPVVAYGALLPPAALAIPRHGWVNLHFSLLPAYRGAAPVQRTLLAGDDLTGASVFQIEPAMDSGPVYGVLTERVRPTDTSGDLLDRLAEAGAGLLVAVMDGIADGTVRPVAQPAEGISFAPKLTAEEARIDWTKPAIAVDRLARAATPAPGAWTTFRDRRLKIGPVRLGAVSGRPAGPVALPAGLPAGGLPAGQIMVLPGGDVAVGTGTSPVLLGEVRPEGRGPMAAAAWARGVRIAKGETLGAIGAMPVSGGTS.

110-113 (SLLP) provides a ligand contact to (6S)-5,6,7,8-tetrahydrofolate.

Belongs to the Fmt family.

The enzyme catalyses L-methionyl-tRNA(fMet) + (6R)-10-formyltetrahydrofolate = N-formyl-L-methionyl-tRNA(fMet) + (6S)-5,6,7,8-tetrahydrofolate + H(+). Functionally, attaches a formyl group to the free amino group of methionyl-tRNA(fMet). The formyl group appears to play a dual role in the initiator identity of N-formylmethionyl-tRNA by promoting its recognition by IF2 and preventing the misappropriation of this tRNA by the elongation apparatus. This Frankia casuarinae (strain DSM 45818 / CECT 9043 / HFP020203 / CcI3) protein is Methionyl-tRNA formyltransferase.